The following is a 685-amino-acid chain: Methionine--tRNA ligase (685 aa).

A 'HIGH' region motif is present at residues 15 to 25 (PYANGPIHLGH). Zn(2+) contacts are provided by Cys-146, Cys-149, Cys-159, and Cys-162. The 'KMSKS' region motif lies at 331 to 335 (KMSKS). ATP is bound at residue Lys-334. In terms of domain architecture, tRNA-binding spans 583 to 685 (DFAKMDLRVA…AGVKAGSRVK (103 aa)).

Belongs to the class-I aminoacyl-tRNA synthetase family. MetG type 1 subfamily. As to quaternary structure, homodimer. Zn(2+) serves as cofactor.

The protein localises to the cytoplasm. It carries out the reaction tRNA(Met) + L-methionine + ATP = L-methionyl-tRNA(Met) + AMP + diphosphate. Its function is as follows. Is required not only for elongation of protein synthesis but also for the initiation of all mRNA translation through initiator tRNA(fMet) aminoacylation. The sequence is that of Methionine--tRNA ligase from Actinobacillus succinogenes (strain ATCC 55618 / DSM 22257 / CCUG 43843 / 130Z).